The sequence spans 204 residues: MTHFSQQDNFSVAARVLGALFYYAPESAEAAPLVAVLTSDGWETQWPLPEASLAPLVTAFQTQCEETHAQAWQRLFVGPWALPSPPWGSVWLDRESVLFGDSTLALRQWMREKGIQFEMKQNEPEDHFGSLLLMAAWLAENGRQTECEELLAWHLFPWSTRFLDVFIEKAEHPFYRALGELARLTLAQWQSQLLIPVAVKPLFR.

This sequence belongs to the TorD/DmsD family. DmsD subfamily.

In terms of biological role, required for biogenesis/assembly of DMSO reductase, but not for the interaction of the DmsA signal peptide with the Tat system. May be part of a chaperone cascade complex that facilitates a folding-maturation pathway for the substrate protein. The sequence is that of Tat proofreading chaperone DmsD from Escherichia coli O157:H7.